The following is an 82-amino-acid chain: Protein costars (82 aa).

The protein belongs to the costars family.

In terms of biological role, modulates actin dynamics and cell motility. The protein is Protein costars (cosA) of Dictyostelium discoideum (Social amoeba).